The chain runs to 400 residues: Canavanine gamma-lyase (400 aa).

The residue at position 213 (Lys-213) is an N6-(pyridoxal phosphate)lysine.

This sequence belongs to the trans-sulfuration enzymes family. The cofactor is pyridoxal 5'-phosphate.

It catalyses the reaction L-canavanine + H2O = N-hydroxyguanidine + L-homoserine. In terms of biological role, lyase involved in the degradation of canavanine, the delta-oxa-analog of arginine, allowing growth on canavanine as sole nitrogen and carbon source. Catalyzes the elimination of hydroxyguanidine from canavanine with a subsequent water addition to yield homoserine. Is highly specific for canavanine and cannot use methionine, cystathionine or arginine. The sequence is that of Canavanine gamma-lyase from Pseudomonas canavaninivorans.